The primary structure comprises 108 residues: L-rhamnose mutarotase (108 aa).

Y19 lines the substrate pocket. The Proton donor role is filled by H23. Substrate is bound by residues Y45 and 80 to 81 (WW).

This sequence belongs to the rhamnose mutarotase family. As to quaternary structure, homodimer.

The protein resides in the cytoplasm. The enzyme catalyses alpha-L-rhamnose = beta-L-rhamnose. The protein operates within carbohydrate metabolism; L-rhamnose metabolism. Functionally, involved in the anomeric conversion of L-rhamnose. This is L-rhamnose mutarotase from Ligilactobacillus salivarius (strain UCC118) (Lactobacillus salivarius).